A 366-amino-acid chain; its full sequence is 3-dehydroquinate synthase (366 aa).

NAD(+) is bound by residues 73–78 (DGERAK), 107–111 (GVVGD), 131–132 (TT), Lys-144, and Lys-153. 3 residues coordinate Zn(2+): Glu-186, His-249, and His-266.

The protein belongs to the sugar phosphate cyclases superfamily. Dehydroquinate synthase family. Co(2+) is required as a cofactor. Requires Zn(2+) as cofactor. It depends on NAD(+) as a cofactor.

The protein localises to the cytoplasm. It catalyses the reaction 7-phospho-2-dehydro-3-deoxy-D-arabino-heptonate = 3-dehydroquinate + phosphate. The protein operates within metabolic intermediate biosynthesis; chorismate biosynthesis; chorismate from D-erythrose 4-phosphate and phosphoenolpyruvate: step 2/7. Catalyzes the conversion of 3-deoxy-D-arabino-heptulosonate 7-phosphate (DAHP) to dehydroquinate (DHQ). In Koribacter versatilis (strain Ellin345), this protein is 3-dehydroquinate synthase.